Reading from the N-terminus, the 129-residue chain is uncharacterized protein (129 aa).

Residues 8 to 24 (YLILFITIIAICSLFRI) traverse the membrane as a helical segment.

The protein localises to the membrane. This is an uncharacterized protein from Rickettsia prowazekii (strain Madrid E).